Here is a 365-residue protein sequence, read N- to C-terminus: Cobalt-precorrin-5B C(1)-methyltransferase (365 aa).

It belongs to the CbiD family.

It carries out the reaction Co-precorrin-5B + S-adenosyl-L-methionine = Co-precorrin-6A + S-adenosyl-L-homocysteine. The protein operates within cofactor biosynthesis; adenosylcobalamin biosynthesis; cob(II)yrinate a,c-diamide from sirohydrochlorin (anaerobic route): step 6/10. Its function is as follows. Catalyzes the methylation of C-1 in cobalt-precorrin-5B to form cobalt-precorrin-6A. In Methanococcus maripaludis (strain C6 / ATCC BAA-1332), this protein is Cobalt-precorrin-5B C(1)-methyltransferase.